Consider the following 463-residue polypeptide: ATP synthase subunit beta (463 aa).

152–159 (GGAGVGKT) lines the ATP pocket.

This sequence belongs to the ATPase alpha/beta chains family. In terms of assembly, F-type ATPases have 2 components, CF(1) - the catalytic core - and CF(0) - the membrane proton channel. CF(1) has five subunits: alpha(3), beta(3), gamma(1), delta(1), epsilon(1). CF(0) has three main subunits: a(1), b(2) and c(9-12). The alpha and beta chains form an alternating ring which encloses part of the gamma chain. CF(1) is attached to CF(0) by a central stalk formed by the gamma and epsilon chains, while a peripheral stalk is formed by the delta and b chains.

The protein localises to the cell inner membrane. The enzyme catalyses ATP + H2O + 4 H(+)(in) = ADP + phosphate + 5 H(+)(out). Produces ATP from ADP in the presence of a proton gradient across the membrane. The catalytic sites are hosted primarily by the beta subunits. In Shewanella baltica (strain OS223), this protein is ATP synthase subunit beta.